Here is a 645-residue protein sequence, read N- to C-terminus: Octopamine receptor Oamb (645 aa).

The Extracellular portion of the chain corresponds to 1 to 25; sequence MNETECEDLIKSVKWTEPANLISLA. Residue Asn2 is glycosylated (N-linked (GlcNAc...) asparagine). The chain crosses the membrane as a helical span at residues 26 to 46; that stretch reads VLEFINVLVIGGNCLVIAAVF. Residues 47 to 56 lie on the Cytoplasmic side of the membrane; that stretch reads CSNKLRSVTN. Residues 57–77 form a helical membrane-spanning segment; that stretch reads FFIVNLAVADLLVGLAVLPFS. The Extracellular segment spans residues 78–94; the sequence is ATWEVFKVWIFGDLWCR. Cysteines 93 and 287 form a disulfide. The helical transmembrane segment at 95–115 threads the bilayer; sequence IWLAVDVWMCTASILNLCAIS. Residues 116–138 are Cytoplasmic-facing; that stretch reads LDRYVAVTRPVTYPSIMSTKKAK. The chain crosses the membrane as a helical span at residues 139–159; that stretch reads SLIAGIWVLSFFICFPPLVGW. Topologically, residues 160–295 are extracellular; it reads KDQKAVIQPT…KCELTNDRGY (136 aa). Asn174 carries an N-linked (GlcNAc...) asparagine glycan. Residues 190–212 are disordered; that stretch reads QLGLDSIKDQGEASLPPSPPHIG. A helical transmembrane segment spans residues 296-316; it reads VLYSALGSFYIPMFVMLFFYW. The Cytoplasmic segment spans residues 317–520; sequence RIYRAAVRTT…FRMETKAAKT (204 aa). Disordered regions lie at residues 358-386 and 479-500; these read GRGS…PSPE and RQSN…KKMG. Positions 369–385 are enriched in low complexity; that stretch reads SNGSTQSTTTTLGTPSP. The helical transmembrane segment at 521–541 threads the bilayer; it reads LAIIVGMFIFCWCPFFTMYII. Residues 542–551 are Extracellular-facing; the sequence is RPFCQDCVDP. The helical transmembrane segment at 552-572 threads the bilayer; sequence LLFSVLFWLGYCNSAVNPMIY. The Cytoplasmic segment spans residues 573–645; it reads ALFSKDFRFA…HHSEMSNDPR (73 aa). The segment at 621-645 is disordered; that stretch reads TPSAAAHSFGDESELHHSEMSNDPR. A compositionally biased stretch (basic and acidic residues) spans 629–645; it reads FGDESELHHSEMSNDPR.

Belongs to the G-protein coupled receptor 1 family. In terms of tissue distribution, highly enriched in mushroom body neuropil and in the ellipsoid body (at protein level). Expressed in oviduct epithelium (at protein level). Expressed in the adult and larval brain, thoracic and abdominal ganglia, terminal cells of the larval tracheal system, muscle, mature eggs and reproductive system.

The protein resides in the cell membrane. In terms of biological role, receptor for octopamine (OA) which is a neurotransmitter, neurohormone and neuromodulator in invertebrates. Stimulates intracellular accumulation of cAMP and Ca(2+) following ligand binding. Required for ovulation. Following activation on mature follicle cells by OA, induces activity of the metalloprotease Mmp2 which leads to breakdown of the posterior follicle wall, resulting in ovulation. Ligand binding probably also leads to activation of CamKII which is also required for ovulation. Modulates sleep/wake behavior by acting in neurons of the pars intercerebralis to promote wakefulness. Plays a role in courtship conditioning where the courtship behavior of males rejected by already mated females is inhibited with further females. Required in the mushroom body for appetitive olfactory learning. Specifically conveys the short-term reinforcing effects of sweet taste. In insulin-producing cells of the brain, plays a role in inhibiting transcription of insulin-like peptide Ilp3. Also plays a role in social behavior by modulating male agression. In Drosophila melanogaster (Fruit fly), this protein is Octopamine receptor Oamb.